A 228-amino-acid chain; its full sequence is MKAVVLLSGGLDSSTALYKAKADGADCYAISFDYRQRHRQELDSAVAIAQSAQVTQHQIVAFDLTLWGGSALTDTQIDLPSRSIEEMADHIPVTYVPARNSIFLSFALAYAETISAEQVYIGVNQLDYSGYPDCRPDFIQAMQEVFRLGTKLGREGQAIEICTPLINLHKSAIIELGNDLGVPWEQTWSCYSDGGGSPPLACGQCDSCQLRLAAFAQLGLSDPLSYAT.

7-17 (LSGGLDSSTAL) serves as a coordination point for ATP. Residues Cys-190, Cys-202, Cys-205, and Cys-208 each coordinate Zn(2+).

This sequence belongs to the QueC family. Zn(2+) serves as cofactor.

It carries out the reaction 7-carboxy-7-deazaguanine + NH4(+) + ATP = 7-cyano-7-deazaguanine + ADP + phosphate + H2O + H(+). The protein operates within purine metabolism; 7-cyano-7-deazaguanine biosynthesis. Catalyzes the ATP-dependent conversion of 7-carboxy-7-deazaguanine (CDG) to 7-cyano-7-deazaguanine (preQ(0)). This is 7-cyano-7-deazaguanine synthase from Acaryochloris marina (strain MBIC 11017).